Reading from the N-terminus, the 139-residue chain is ATP synthase epsilon chain (139 aa).

It belongs to the ATPase epsilon chain family. As to quaternary structure, F-type ATPases have 2 components, CF(1) - the catalytic core - and CF(0) - the membrane proton channel. CF(1) has five subunits: alpha(3), beta(3), gamma(1), delta(1), epsilon(1). CF(0) has three main subunits: a, b and c.

It is found in the cell membrane. In terms of biological role, produces ATP from ADP in the presence of a proton gradient across the membrane. This is ATP synthase epsilon chain from Roseiflexus sp. (strain RS-1).